Here is a 215-residue protein sequence, read N- to C-terminus: Probable peptidyl-prolyl cis-trans isomerase (215 aa).

The region spanning 38–197 (DGIYAVMETN…RRGAAAKRFV (160 aa)) is the PPIase cyclophilin-type domain.

The protein belongs to the cyclophilin-type PPIase family.

The catalysed reaction is [protein]-peptidylproline (omega=180) = [protein]-peptidylproline (omega=0). PPIases accelerate the folding of proteins. It catalyzes the cis-trans isomerization of proline imidic peptide bonds in oligopeptides. The polypeptide is Probable peptidyl-prolyl cis-trans isomerase (ppiB) (Treponema pallidum (strain Nichols)).